Consider the following 724-residue polypeptide: Phenylalanine ammonia-lyase (724 aa).

Tyr99 acts as the Proton donor/acceptor in catalysis. The segment at residues Ala204–Gly206 is a cross-link (5-imidazolinone (Ala-Gly)). A 2,3-didehydroalanine (Ser) modification is found at Ser205. 7 residues coordinate (E)-cinnamate: Asn265, Gln355, Arg361, Asn391, Lys462, Glu490, and Asn493.

Belongs to the PAL/histidase family. In terms of assembly, homotetramer. Contains an active site 4-methylidene-imidazol-5-one (MIO), which is formed autocatalytically by cyclization and dehydration of residues Ala-Ser-Gly.

Its subcellular location is the cytoplasm. It carries out the reaction L-phenylalanine = (E)-cinnamate + NH4(+). Its pathway is phenylpropanoid metabolism; trans-cinnamate biosynthesis; trans-cinnamate from L-phenylalanine: step 1/1. In terms of biological role, catalyzes the non-oxidative deamination of L-phenylalanine to form trans-cinnamic acid and a free ammonium ion. Facilitates the commitment step in phenylpropanoid pathways that produce secondary metabolites such as lignins, coumarins and flavonoids. The sequence is that of Phenylalanine ammonia-lyase from Flammulina velutipes (Agaricus velutipes).